Here is a 282-residue protein sequence, read N- to C-terminus: Bifunctional protein FolD 2 (282 aa).

Residues 164–166 (GRS) and Ser189 contribute to the NADP(+) site.

Belongs to the tetrahydrofolate dehydrogenase/cyclohydrolase family. In terms of assembly, homodimer.

The enzyme catalyses (6R)-5,10-methylene-5,6,7,8-tetrahydrofolate + NADP(+) = (6R)-5,10-methenyltetrahydrofolate + NADPH. It catalyses the reaction (6R)-5,10-methenyltetrahydrofolate + H2O = (6R)-10-formyltetrahydrofolate + H(+). Its pathway is one-carbon metabolism; tetrahydrofolate interconversion. Catalyzes the oxidation of 5,10-methylenetetrahydrofolate to 5,10-methenyltetrahydrofolate and then the hydrolysis of 5,10-methenyltetrahydrofolate to 10-formyltetrahydrofolate. The protein is Bifunctional protein FolD 2 of Lactobacillus johnsonii (strain CNCM I-12250 / La1 / NCC 533).